The following is a 159-amino-acid chain: Large ribosomal subunit protein uL15 (159 aa).

Basic and acidic residues predominate over residues 1-11 (MKLNELRDNEG). The segment at 1–40 (MKLNELRDNEGARYQSKRLGRGIGSGKGKTSGKGVKGQTS) is disordered. A compositionally biased stretch (gly residues) spans 21–35 (RGIGSGKGKTSGKGV).

It belongs to the universal ribosomal protein uL15 family. In terms of assembly, part of the 50S ribosomal subunit.

Binds to the 23S rRNA. The chain is Large ribosomal subunit protein uL15 from Paramagnetospirillum magneticum (strain ATCC 700264 / AMB-1) (Magnetospirillum magneticum).